The following is a 298-amino-acid chain: Probable aspartoacylase (298 aa).

H13 and E16 together coordinate Zn(2+). Residues R54 and 61-62 (NR) contribute to the substrate site. Zn(2+) is bound at residue H103. Residues E161 and Y271 each contribute to the substrate site.

It belongs to the AspA/AstE family. Aspartoacylase subfamily. Zn(2+) serves as cofactor.

The catalysed reaction is an N-acyl-L-aspartate + H2O = a carboxylate + L-aspartate. The protein is Probable aspartoacylase of Prochlorococcus marinus (strain MIT 9515).